A 618-amino-acid chain; its full sequence is V-type proton ATPase catalytic subunit A (618 aa).

Residue 251–258 (GAFGCGKT) participates in ATP binding.

This sequence belongs to the ATPase alpha/beta chains family. As to quaternary structure, V-ATPase is a heteromultimeric enzyme composed of a peripheral catalytic V1 complex (main components: subunits A, B, C, D, E, and F) attached to an integral membrane V0 proton pore complex (main component: the proteolipid protein).

The enzyme catalyses ATP + H2O + 4 H(+)(in) = ADP + phosphate + 5 H(+)(out). Functionally, catalytic subunit of the peripheral V1 complex of vacuolar ATPase. V-ATPase vacuolar ATPase is responsible for acidifying a variety of intracellular compartments in eukaryotic cells. This Dictyostelium discoideum (Social amoeba) protein is V-type proton ATPase catalytic subunit A (vatA).